Consider the following 151-residue polypeptide: MKVILIKDCKDGKANTIIEVSDGYGSNFLINKGFALPYNEKTKKQLEKRLSDLTANEMEMRQSALELKEKLEKESLKYELEANIDANSNLNVHGAVSTKDIVKSLVKLGYKLDKYAVQKVHLVGRGVHLIDVIVYKDIVAKLKVDIIINVK.

It belongs to the bacterial ribosomal protein bL9 family.

In terms of biological role, binds to the 23S rRNA. In Mycoplasmopsis agalactiae (strain NCTC 10123 / CIP 59.7 / PG2) (Mycoplasma agalactiae), this protein is Large ribosomal subunit protein bL9.